We begin with the raw amino-acid sequence, 394 residues long: RAB6A-GEF complex partner protein 2 (394 aa).

The protein belongs to the RGP1 family. In terms of assembly, forms a complex with RIC1; the interaction enhances RAB6A GTPase activity. Interacts with RIC1. Interacts with RAB6A; the interaction is direct with a preference for RAB6A-GDP. Interacts with RAB33B.

The protein resides in the cytoplasm. Its subcellular location is the cytosol. It localises to the membrane. Functionally, the RIC1-RGP1 complex acts as a guanine nucleotide exchange factor (GEF), which activates RAB6A by exchanging bound GDP for free GTP and may thereby required for efficient fusion of endosome-derived vesicles with the Golgi compartment. The RIC1-RGP1 complex participates in the recycling of mannose-6-phosphate receptors. The protein is RAB6A-GEF complex partner protein 2 of Bos taurus (Bovine).